Reading from the N-terminus, the 308-residue chain is Very-long-chain enoyl-CoA reductase (308 aa).

Residues 1–86 (MKHYEVEILD…YFRDLGAQIS (86 aa)) are Cytoplasmic-facing. K22 is modified (N6-acetyllysine). Position 58 is a phosphoserine (S58). K60 carries the N6-acetyllysine modification. The chain crosses the membrane as a helical span at residues 87–106 (WVTVFLTEYAGPLFIYLLFY). Topologically, residues 107 to 124 (FRVPFIYGRKYDFTSSRH) are lumenal. The chain crosses the membrane as a helical span at residues 125–147 (TVVHLACICHSFHYIKRLLETLF). Residues 148-158 (VHRFSHGTMPL) are Cytoplasmic-facing. The chain crosses the membrane as a helical span at residues 159–180 (RNIFKNCTYYWGFAAWMAYYIN). Residues 181–189 (HPLYTPPTY) lie on the Lumenal side of the membrane. The chain crosses the membrane as a helical span at residues 190–216 (GAQQVKLALAIFVICQLGNFSIHMALR). Residues 217–245 (DLRPAGSKTRKIPYPTRNPFTWLFLLVSC) are Cytoplasmic-facing. The chain crosses the membrane as a helical span at residues 246–262 (PNYTYEVGSWIGFAIMT). The Lumenal portion of the chain corresponds to 263 to 264 (QC). Residues 265-292 (LPVALFSLVGFTQMTIWAKGKHRSYLKE) form a helical membrane-spanning segment. Over 293-308 (FRDYPPLRMPIIPFLL) the chain is Cytoplasmic.

This sequence belongs to the steroid 5-alpha reductase family. In terms of assembly, interacts with ELOVL1 and LASS2. Glycosylated.

It is found in the endoplasmic reticulum membrane. The catalysed reaction is a very-long-chain 2,3-saturated fatty acyl-CoA + NADP(+) = a very-long-chain (2E)-enoyl-CoA + NADPH + H(+). The enzyme catalyses octadecanoyl-CoA + NADP(+) = (2E)-octadecenoyl-CoA + NADPH + H(+). It carries out the reaction (2E,7Z,10Z,13Z,16Z)-docosapentaenoyl-CoA + NADPH + H(+) = (7Z,10Z,13Z,16Z)-docosatetraenoyl-CoA + NADP(+). It catalyses the reaction (2E,7Z,10Z,13Z,16Z,19Z)-docosahexaenoyl-CoA + NADPH + H(+) = (7Z,10Z,13Z,16Z,19Z)-docosapentaenoyl-CoA + NADP(+). The catalysed reaction is (2E,8Z,11Z,14Z)-eicosatetraenoyl-CoA + NADPH + H(+) = (8Z,11Z,14Z)-eicosatrienoyl-CoA + NADP(+). The enzyme catalyses (2E)-hexadecenoyl-CoA + NADPH + H(+) = hexadecanoyl-CoA + NADP(+). The protein operates within lipid metabolism; fatty acid biosynthesis. Its pathway is lipid metabolism; sphingolipid metabolism. Involved in both the production of very long-chain fatty acids for sphingolipid synthesis and the degradation of the sphingosine moiety in sphingolipids through the sphingosine 1-phosphate metabolic pathway. Catalyzes the last of the four reactions of the long-chain fatty acids elongation cycle. This endoplasmic reticulum-bound enzymatic process, allows the addition of 2 carbons to the chain of long- and very long-chain fatty acids/VLCFAs per cycle. This enzyme reduces the trans-2,3-enoyl-CoA fatty acid intermediate to an acyl-CoA that can be further elongated by entering a new cycle of elongation. Thereby, it participates in the production of VLCFAs of different chain lengths that are involved in multiple biological processes as precursors of membrane lipids and lipid mediators. Catalyzes the saturation step of the sphingosine 1-phosphate metabolic pathway, the conversion of trans-2-hexadecenoyl-CoA to palmitoyl-CoA. This chain is Very-long-chain enoyl-CoA reductase (TECR), found in Bos taurus (Bovine).